The chain runs to 147 residues: Large ribosomal subunit protein bL9 (147 aa).

Belongs to the bacterial ribosomal protein bL9 family.

In terms of biological role, binds to the 23S rRNA. This is Large ribosomal subunit protein bL9 from Sulfurovum sp. (strain NBC37-1).